Reading from the N-terminus, the 398-residue chain is Immunoglobulin heavy constant gamma 2A (398 aa).

3 consecutive Ig-like domains span residues 5–97, 120–219, and 228–324; these read PSVY…KKIE, PSVF…RTIS, and PQVY…KSFS. Intrachain disulfides connect C26–C81, C143–C203, and C249–C307. Residue N179 is glycosylated (N-linked (GlcNAc...) asparagine). Residues 345–362 form a helical membrane-spanning segment; sequence GLWTTITIFISLFLLSVC. Topologically, residues 363–398 are cytoplasmic; it reads YSASVTLFKVKWIFSSVVELKQTISPDYRNMIGQGA.

Its subcellular location is the cell membrane. This is Immunoglobulin heavy constant gamma 2A from Mus musculus (Mouse).